The sequence spans 221 residues: Tetraspanin-2 (221 aa).

Residues 1 to 13 (MGRFRGGLRCIKY) are Cytoplasmic-facing. Residues 14-34 (LLLGFNLLFWLAGSAVIAFGL) traverse the membrane as a helical segment. Over 35 to 54 (WFRFGGTIKDLSSEEKSPEY) the chain is Extracellular. A helical membrane pass occupies residues 55 to 75 (FYVGLYVLVGAGALMMAVGFF). Over 76–90 (GCCGAMRESQCVLGS) the chain is Cytoplasmic. A helical membrane pass occupies residues 91-111 (FFTCLLVIFAAEVTTGVFAFI). At 112 to 188 (GKDVAIRHVQ…ETIISVKLQL (77 aa)) the chain is on the extracellular side. N-linked (GlcNAc...) asparagine glycosylation is present at Asn-139. Residues 189-209 (IGIVGIGIAGLTIFGMIFSMV) form a helical membrane-spanning segment. The Cytoplasmic portion of the chain corresponds to 210–221 (LCCAIRNSRDVI).

The protein belongs to the tetraspanin (TM4SF) family. As to expression, expression is restricted to the nervous system.

The protein resides in the membrane. May play a role in signalling in oligodendrocytes in the early stages of their terminal differentiation into myelin-forming glia and may also function in stabilizing the mature sheath. The chain is Tetraspanin-2 (Tspan2) from Rattus norvegicus (Rat).